Consider the following 302-residue polypeptide: MSNALYQSSINSLPLLGHGKVRDNYAVGNDKLLIVTTDRLSAFDVIMGEPIPDKGRVLNQMANFWFRKLAHIVPNHETGIAPETVVAPEEVEQVKGRAVVVKRLRPILVEAVVRGYLAGSGWKDYQATGKVCGIELPAGLQNAQKLPEPIFTPAAKAEMGEHDENISFAEVEARIGIALARQMRDISIRLYKEAAEFAATRGIIIADTKFEFGLDDNGVLTLMDEVLTADSSRFWPADSYQVGTNPPSFDKQFVRDWLEAVRIDGKPWPKTAPAPQLPDEVIEKTAAKYREALTRLTGEELQ.

Belongs to the SAICAR synthetase family.

The catalysed reaction is 5-amino-1-(5-phospho-D-ribosyl)imidazole-4-carboxylate + L-aspartate + ATP = (2S)-2-[5-amino-1-(5-phospho-beta-D-ribosyl)imidazole-4-carboxamido]succinate + ADP + phosphate + 2 H(+). It functions in the pathway purine metabolism; IMP biosynthesis via de novo pathway; 5-amino-1-(5-phospho-D-ribosyl)imidazole-4-carboxamide from 5-amino-1-(5-phospho-D-ribosyl)imidazole-4-carboxylate: step 1/2. The sequence is that of Phosphoribosylaminoimidazole-succinocarboxamide synthase from Cupriavidus necator (strain ATCC 17699 / DSM 428 / KCTC 22496 / NCIMB 10442 / H16 / Stanier 337) (Ralstonia eutropha).